The sequence spans 610 residues: MSEIFDAKAFLKTVTSQPGVYRMYDAGGTVIYVGKAKDLKKRLSSYFRSNLASRKTEALVAQIQHIDVTVTHTETEALLLEHNYIKLYQPRYNVLLRDDKSYPFIFLSGDTHPRLAMHRGAKHAKGEYFGPFPNGYAVRETLALLQKIFPIRQCENSVYRNRSRPCLQYQIGRCLGPCVAGLVSEEEYAQQVEYVRLFLSGKDDQVLTQLIARMEKASQDLAFEEAARIRDQIQAVRRVTEKQFVSNAGDDLDVIGVAFDAGMACVHVLFIRQGKVLGSRSYFPKVPGGTELGEVVETFVGQFYLQGSQMRTLPGEILLDFNLSDKTLLADSLSELAGRRIHVQTKPRGDRARYLKLARTNAATALITKLSQQSTITQRLSALAAVLKLPAIKRMECFDISHTMGEQTVASCVVFDANGPLRAEYRRYNIAGITPGDDYAAMNQVLRRRYGKAIEESKIPDVILIDGGKGQLAQAKAVFAELDVPWDKHRPLLLGVAKGADRKAGLETLFFEPEGEGFSLPPDSPALHVIQHIRDESHDHAIGGHRKKRAKVKNTSTLETIEGVGPKRRQMLLKYMGGLQGLRNASVEEIAKVPGISQGLAEKIFWSLKH.

In terms of domain architecture, GIY-YIG spans 16 to 94; sequence SQPGVYRMYD…IKLYQPRYNV (79 aa). The UVR domain occupies 204 to 239; the sequence is DQVLTQLIARMEKASQDLAFEEAARIRDQIQAVRRV.

This sequence belongs to the UvrC family. In terms of assembly, interacts with UvrB in an incision complex.

Its subcellular location is the cytoplasm. Its function is as follows. The UvrABC repair system catalyzes the recognition and processing of DNA lesions. UvrC both incises the 5' and 3' sides of the lesion. The N-terminal half is responsible for the 3' incision and the C-terminal half is responsible for the 5' incision. The polypeptide is UvrABC system protein C (Salmonella typhimurium (strain LT2 / SGSC1412 / ATCC 700720)).